The chain runs to 554 residues: Phenylalanine--tRNA ligase beta subunit (554 aa).

A B5 domain is found at 274 to 351 (LTPDSAEITI…INYGYENFNG (78 aa)). Mg(2+)-binding residues include Asp329, Asp335, and Asp339.

It belongs to the phenylalanyl-tRNA synthetase beta subunit family. Type 2 subfamily. Tetramer of two alpha and two beta subunits. Mg(2+) serves as cofactor.

The protein resides in the cytoplasm. The enzyme catalyses tRNA(Phe) + L-phenylalanine + ATP = L-phenylalanyl-tRNA(Phe) + AMP + diphosphate + H(+). This Methanococcus aeolicus (strain ATCC BAA-1280 / DSM 17508 / OCM 812 / Nankai-3) protein is Phenylalanine--tRNA ligase beta subunit.